We begin with the raw amino-acid sequence, 577 residues long: ER degradation-enhancing alpha-mannosidase-like protein 2 (577 aa).

Residues 1-21 (MPFRLLIPLGLVCVLLPLHHG) form the signal peptide. 4 N-linked (GlcNAc...) asparagine glycosylation sites follow: Asn-90, Asn-112, Asn-289, and Asn-450. Residues 513-561 (PKRAQRKTVRSGPWEPQSGPATLSSPANQPREKQPAQQRTPLLSCPSQP) form a disordered region. 2 stretches are compositionally biased toward polar residues: residues 531–540 (GPATLSSPAN) and 547–561 (PAQQ…PSQP).

The protein belongs to the glycosyl hydrolase 47 family. In terms of processing, N-glycosylated.

Its subcellular location is the endoplasmic reticulum lumen. Involved in the endoplasmic reticulum-associated degradation (ERAD) pathway that targets misfolded glycoproteins for degradation in an N-glycan-dependent manner. May initiate ERAD by promoting the first mannose trimming step of ERAD substrates, from Man9GlcNAc2 to Man8GlcNAc2. Seems to recognize and bind to exposed hydrophobic regions in target proteins. In Mus musculus (Mouse), this protein is ER degradation-enhancing alpha-mannosidase-like protein 2.